The primary structure comprises 649 residues: PTS system mannitol-specific EIICBA component (649 aa).

The region spanning 13-342 (FGRFLSNMVM…LLMKAQTSTE (330 aa)) is the PTS EIIC type-2 domain. Helical transmembrane passes span 25 to 46 (IGAF…WVPN), 51 to 71 (SLVG…TGGK), 135 to 156 (SAGI…PFVK), 166 to 186 (VNFL…EPAK), 274 to 293 (AIAG…AGLV), and 314 to 335 (LGVV…ALLM). The PTS EIIB type-2 domain occupies 384–475 (QSIIVACDAG…LVTQLLAAKR (92 aa)). C390 acts as the Phosphocysteine intermediate; for EIIB activity in catalysis. Phosphocysteine; by EIIA is present on C390. Residues 504–646 (FQLQKENIHL…SDVLSILATS (143 aa)) form the PTS EIIA type-2 domain. H564 functions as the Tele-phosphohistidine intermediate; for EIIA activity in the catalytic mechanism. H564 carries the post-translational modification Phosphohistidine; by HPr.

In terms of assembly, homodimer. In terms of processing, an intramolecular phosphotransfer takes places between His-564 and Cys-390.

The protein resides in the cell inner membrane. The catalysed reaction is D-mannitol(out) + N(pros)-phospho-L-histidyl-[protein] = D-mannitol 1-phosphate(in) + L-histidyl-[protein]. The phosphoenolpyruvate-dependent sugar phosphotransferase system (sugar PTS), a major carbohydrate active transport system, catalyzes the phosphorylation of incoming sugar substrates concomitantly with their translocation across the cell membrane. This system is involved in D-mannitol transport. This Vibrio cholerae serotype O1 (strain ATCC 39315 / El Tor Inaba N16961) protein is PTS system mannitol-specific EIICBA component (mtlA).